A 230-amino-acid chain; its full sequence is PKHD-type hydroxylase PD_1553 (230 aa).

Residues arginine 78–serine 182 enclose the Fe2OG dioxygenase domain. 3 residues coordinate Fe cation: histidine 96, aspartate 98, and histidine 163. A 2-oxoglutarate-binding site is contributed by arginine 173.

Requires Fe(2+) as cofactor. The cofactor is L-ascorbate.

In Xylella fastidiosa (strain Temecula1 / ATCC 700964), this protein is PKHD-type hydroxylase PD_1553.